Here is a 426-residue protein sequence, read N- to C-terminus: Histidine--tRNA ligase (426 aa).

This sequence belongs to the class-II aminoacyl-tRNA synthetase family. As to quaternary structure, homodimer.

It is found in the cytoplasm. The catalysed reaction is tRNA(His) + L-histidine + ATP = L-histidyl-tRNA(His) + AMP + diphosphate + H(+). This Streptococcus agalactiae serotype Ia (strain ATCC 27591 / A909 / CDC SS700) protein is Histidine--tRNA ligase.